Here is a 460-residue protein sequence, read N- to C-terminus: Elongation factor 1-alpha (460 aa).

G2 carries the post-translational modification N,N,N-trimethylglycine. Residue K3 is modified to N6,N6-dimethyllysine; alternate. Position 3 is an N6-methyllysine; alternate (K3). The tr-type G domain occupies 6–241 (KAHINVVVIG…DAIEQPKRPT (236 aa)). A G1 region spans residues 15–22 (GHVDSGKS). GTP is bound at residue 15-22 (GHVDSGKS). K31 carries the post-translational modification N6-methyllysine. The interval 71-75 (GITID) is G2. Residue K80 is modified to N6,N6,N6-trimethyllysine. Residues 92 to 95 (DAPG) are G3. GTP-binding positions include 92-96 (DAPGH) and 154-157 (NKMD). The segment at 154–157 (NKMD) is G4. A G5 region spans residues 193 to 195 (SGF). K317 is subject to N6,N6-dimethyllysine; alternate. K317 bears the N6-methyllysine; alternate mark. K391 bears the N6-methyllysine mark.

Belongs to the TRAFAC class translation factor GTPase superfamily. Classic translation factor GTPase family. EF-Tu/EF-1A subfamily.

The protein localises to the cytoplasm. In terms of biological role, this protein promotes the GTP-dependent binding of aminoacyl-tRNA to the A-site of ribosomes during protein biosynthesis. The polypeptide is Elongation factor 1-alpha (TEF) (Sordaria macrospora).